The chain runs to 321 residues: Cytochrome f (321 aa).

The N-terminal stretch at 1 to 37 is a signal peptide; that stretch reads MKIYRQIKQSFSITKIVFSFFISLLLNLVAQPTICQA. 4 residues coordinate heme: Phe38, Cys58, Cys61, and His62. A helical membrane pass occupies residues 287 to 306; the sequence is VQGLIAFFISVVLAQIFLVL.

The protein belongs to the cytochrome f family. As to quaternary structure, the 4 large subunits of the cytochrome b6-f complex are cytochrome b6, subunit IV (17 kDa polypeptide, petD), cytochrome f and the Rieske protein, while the 4 small subunits are PetG, PetL, PetM and PetN. The complex functions as a dimer. Requires heme as cofactor.

It localises to the plastid. The protein localises to the cyanelle thylakoid membrane. Component of the cytochrome b6-f complex, which mediates electron transfer between photosystem II (PSII) and photosystem I (PSI), cyclic electron flow around PSI, and state transitions. This chain is Cytochrome f (petA), found in Cyanophora paradoxa.